Consider the following 182-residue polypeptide: MKLAELKDHMQKSVEATQRSFNTIRTGRANASLLDRITVEYYGAETPLKSLATIGTPDASTIVIQPFDMGSIGTIEKAISLSDLGLTPNNDGKVIRLNIPPLTAERRKELVKVAGKLAEEGKVAIRNIRRDAVDEVRKQEKNSDISEDEARDLQEEIQKLTDQSTKRIDELLAAKEKDITTV.

It belongs to the RRF family.

The protein localises to the cytoplasm. Responsible for the release of ribosomes from messenger RNA at the termination of protein biosynthesis. May increase the efficiency of translation by recycling ribosomes from one round of translation to another. The polypeptide is Ribosome-recycling factor (Synechocystis sp. (strain ATCC 27184 / PCC 6803 / Kazusa)).